Here is a 223-residue protein sequence, read N- to C-terminus: uncharacterized protein (223 aa).

Residues 5-116 enclose the Response regulatory domain; it reads RILIVEDDVM…ELLLRMRNML (112 aa). 4-aspartylphosphate is present on Asp-52. The ompR/PhoB-type DNA-binding region spans 121 to 219; it reads GTFTQIKHLY…IYGEGYRLNT (99 aa).

Phosphorylated by YbdK.

It is found in the cytoplasm. Functionally, member of the two-component regulatory system YbdK/YbdJ. This is an uncharacterized protein from Bacillus subtilis (strain 168).